The sequence spans 118 residues: Holo-[acyl-carrier-protein] synthase (118 aa).

Mg(2+) is bound by residues aspartate 8 and glutamate 50.

This sequence belongs to the P-Pant transferase superfamily. AcpS family. Mg(2+) serves as cofactor.

It localises to the cytoplasm. The enzyme catalyses apo-[ACP] + CoA = holo-[ACP] + adenosine 3',5'-bisphosphate + H(+). Functionally, transfers the 4'-phosphopantetheine moiety from coenzyme A to a Ser of acyl-carrier-protein. This chain is Holo-[acyl-carrier-protein] synthase, found in Leifsonia xyli subsp. xyli (strain CTCB07).